The chain runs to 598 residues: Elongation factor 4 (598 aa).

Residues 2-184 form the tr-type G domain; it reads KNIRNFSIIA…EIVRCIPPPV (183 aa). GTP contacts are provided by residues 14–19 and 131–134; these read DHGKST and NKID.

The protein belongs to the TRAFAC class translation factor GTPase superfamily. Classic translation factor GTPase family. LepA subfamily.

Its subcellular location is the cell inner membrane. The enzyme catalyses GTP + H2O = GDP + phosphate + H(+). In terms of biological role, required for accurate and efficient protein synthesis under certain stress conditions. May act as a fidelity factor of the translation reaction, by catalyzing a one-codon backward translocation of tRNAs on improperly translocated ribosomes. Back-translocation proceeds from a post-translocation (POST) complex to a pre-translocation (PRE) complex, thus giving elongation factor G a second chance to translocate the tRNAs correctly. Binds to ribosomes in a GTP-dependent manner. This Psychromonas ingrahamii (strain DSM 17664 / CCUG 51855 / 37) protein is Elongation factor 4.